An 837-amino-acid chain; its full sequence is Amyloid-beta A4 precursor protein-binding family A member 1 (837 aa).

Disordered stretches follow at residues 1–93 (MNHL…DTAE), 238–342 (YDER…SKEK), and 358–435 (EEVK…ESRK). Residues 23 to 38 (ESVEADLEHPEVEEEQ) show a composition bias toward acidic residues. 7 positions are modified to phosphoserine: Ser78, Ser242, Ser246, Ser248, Ser263, Ser280, and Ser285. The segment at 226–314 (YRQEALGARL…TPAGGRPDSP (89 aa)) is munc-18-1 binding. Over residues 238–254 (YDERSDGESDSPEKEAE) the composition is skewed to basic and acidic residues. Thr305 bears the Phosphothreonine mark. Residues Ser313 and Ser367 each carry the phosphoserine modification. Thr370 is subject to Phosphothreonine. An LIN-2/CASK binding region spans residues 373 to 436 (EPKEPIWVMR…ASTNKESRKS (64 aa)). Positions 387–398 (PTRDCDDQRPMD) are enriched in basic and acidic residues. Residues 399 to 418 (GDSPSPGSSSPLGAESSSTS) are compositionally biased toward low complexity. Phosphoserine is present on residues Ser401, Ser403, Ser408, and Ser568. A PID domain is found at 457–643 (DGIIFAANYL…LLNTQDMYND (187 aa)). The segment at 626-641 (LSQKEYSDLLNTQDMY) is autoinhibitory helix linker. PDZ domains are found at residues 656 to 742 (DVFI…IVRC) and 747 to 822 (TVLI…TMPA).

As to quaternary structure, part of a multimeric complex containing STXBP1 and STX1A. Interacts with STXBP1. Also part of the brain-specific heterotrimeric complex LIN-10/X11-alpha, LIN-2/CASK, and LIN7. Component of the brain-specific heterotrimeric complex (LIN-10-LIN-2-LIN-7 complex) composed of at least APBA1, CASK, and LIN7, which associates with the motor protein KIF17 to transport vesicles along microtubules. Within the complex, interacts (via PDZ domain) with the motor protein KIF17; the interaction is direct and is required for association of KIF17 with the cargo that is to be transported. Both isoform 1 and isoform 2 bind to the cytoplasmic domain of amyloid protein (APP). Interacts (via PDZ 1 and 2 domains) with FSPB. Isoform 2, but not isoform 1, interacts (via its truncated PID domain) with active, GTP-bound RAB6A and RAB6B. Brain and spinal cord. Isoform 2 is expressed in testis and brain, but not detected in lung, liver or spleen.

It is found in the cytoplasm. Its subcellular location is the perinuclear region. The protein localises to the nucleus. The protein resides in the golgi apparatus. Putative function in synaptic vesicle exocytosis by binding to Munc18-1, an essential component of the synaptic vesicle exocytotic machinery. May modulate processing of the amyloid-beta precursor protein (APP) and hence formation of APP-beta. Component of the LIN-10-LIN-2-LIN-7 complex, which associates with the motor protein KIF17 to transport vesicles containing N-methyl-D-aspartate (NMDA) receptor subunit NR2B along microtubules. This is Amyloid-beta A4 precursor protein-binding family A member 1 (APBA1) from Homo sapiens (Human).